The chain runs to 385 residues: Trans-enoyl reductase poxH (385 aa).

64–67 (QPYS) contributes to the NADP(+) binding site. 156–163 (PDPAAPPI) is a substrate binding site. NADP(+)-binding positions include 199–202 (STSV), 223–226 (SGTD), Tyr-241, and 289–290 (LG). A substrate-binding site is contributed by 309-313 (HMAPL). 372 to 373 (KR) provides a ligand contact to NADP(+).

It belongs to the zinc-containing alcohol dehydrogenase family. Monomer.

It functions in the pathway secondary metabolite biosynthesis. Its function is as follows. Trans-enoyl reductase; part of the gene cluster that mediates the biosynthesis of oxaleimides, cytotoxic compounds containing an unusual disubstituted succinimide moiety. The first step of the pathway is provided by the HR-PKS poxF that serves in a new mode of collaborative biosynthesis with the PKS-NRPS poxE, by providing the olefin containing amino acid substrate via the synthesis of an ACP-bound dec-4-enoate. The cytochrome P450 monooxygenase poxM-catalyzed oxidation at the alpha-position creates the enzyme-bound 2-hydroxydec-4-enoyl-ACP thioester, which may be prone to spontaneous hydrolysis to yield 2-hydroxydec-4-enoic acid due to increased electrophilicity of the carbonyl. 2-hydroxydec-4-enoic acid can then be further oxidized by poxM to yield the alpha-ketoacid 2-oxodec-4-enoicacid, which is reductively aminated by the aminotransferase poxL to yield (S,E)-2-aminodec-4-enoic acid. The Hybrid PKS-NRPS synthetase poxE then performs condensation between the octaketide product of its PKS modules and the amino group of (S,E)-2-aminodec-4-enoic acid which is activated and incorporated by the adenylation domain. The resulting aminoacyl product can be cyclized by the Diels-Alderase PoxQ and reductively released by the reductive (R) domain of poxE to yield an aldehyde intermediate. The released aldehyde is then substrate for a Knoevenagel condensation by the hydrolyase poxO followed by an oxidation at the 5-position of the pyrrolidone ring. The presence of the olefin from the amino acid building block allows for migration of the substituted allyl group to occur. This allylic transposition reaction takes place in a conjugate addition, semipinacol-like fashion to yield a succinimide intermediate. Iterative two-electron oxidations of the C7 methyl of the succinimide intermediate to the carboxylic acid can be catalyzed by one of two remaining cytochrome P450 monooxygenasess poxC or poxD to yield oxaleimide A. Subsequent oxidation yields the maleimide scaffold oxaleimide I. Both oxaleimide A and oxaleimide I can undergo oxidative modifications in the decalin ring to yield the series of products oxaleimides B to H. This Penicillium oxalicum protein is Trans-enoyl reductase poxH.